The sequence spans 526 residues: Chaperonin GroEL 2 (526 aa).

3 residues coordinate ATP: lysine 50, glycine 413, and aspartate 494.

Belongs to the chaperonin (HSP60) family. Forms a cylinder of 14 subunits composed of two heptameric rings stacked back-to-back. Interacts with the co-chaperonin GroES.

It is found in the cytoplasm. It carries out the reaction ATP + H2O + a folded polypeptide = ADP + phosphate + an unfolded polypeptide.. Together with its co-chaperonin GroES, plays an essential role in assisting protein folding. The GroEL-GroES system forms a nano-cage that allows encapsulation of the non-native substrate proteins and provides a physical environment optimized to promote and accelerate protein folding. In Chlamydia pneumoniae (Chlamydophila pneumoniae), this protein is Chaperonin GroEL 2.